Reading from the N-terminus, the 333-residue chain is Glycerol-3-phosphate dehydrogenase [NAD(P)+] (333 aa).

NADPH-binding residues include Trp13, Lys33, and Lys108. Sn-glycerol 3-phosphate-binding residues include Lys108 and Gly138. Residue Ser142 participates in NADPH binding. Lys193, Asp246, Ser256, Arg257, and Asn258 together coordinate sn-glycerol 3-phosphate. The active-site Proton acceptor is the Lys193. An NADPH-binding site is contributed by Arg257. Residues Val281 and Glu283 each contribute to the NADPH site.

Belongs to the NAD-dependent glycerol-3-phosphate dehydrogenase family.

The protein localises to the cytoplasm. It catalyses the reaction sn-glycerol 3-phosphate + NAD(+) = dihydroxyacetone phosphate + NADH + H(+). It carries out the reaction sn-glycerol 3-phosphate + NADP(+) = dihydroxyacetone phosphate + NADPH + H(+). It participates in membrane lipid metabolism; glycerophospholipid metabolism. Functionally, catalyzes the reduction of the glycolytic intermediate dihydroxyacetone phosphate (DHAP) to sn-glycerol 3-phosphate (G3P), the key precursor for phospholipid synthesis. The polypeptide is Glycerol-3-phosphate dehydrogenase [NAD(P)+] (Bifidobacterium longum subsp. infantis (strain ATCC 15697 / DSM 20088 / JCM 1222 / NCTC 11817 / S12)).